Here is a 123-residue protein sequence, read N- to C-terminus: UPF0102 protein Dole_2298 (123 aa).

The protein belongs to the UPF0102 family.

The polypeptide is UPF0102 protein Dole_2298 (Desulfosudis oleivorans (strain DSM 6200 / JCM 39069 / Hxd3) (Desulfococcus oleovorans)).